Consider the following 338-residue polypeptide: Sulfotransferase 2B1 (338 aa).

67–72 provides a ligand contact to 3'-phosphoadenylyl sulfate; it reads KSGTNW. Residues W95 and W100 each contribute to the substrate site. The active-site Proton acceptor is H122. Residues R144, S152, Y207, 241–246, and 271–273 each bind 3'-phosphoadenylyl sulfate; these read SAFAAM and RKG. The interval 301-338 is disordered; the sequence is VQRFPWDTSEEDSSPDGQPDPEPSPSPASDDPNPGSSQ. The span at 327-338 shows a compositional bias: low complexity; the sequence is PASDDPNPGSSQ.

It belongs to the sulfotransferase 1 family. Expressed at high levels in epididymis, intestine and uterus, and low levels in brain and hypothalamus. Isoform 2 is most prominent in the brain and spinal cord, with modest expression in the lung, skin and spleen. Isoform 1 is most prominently expressed in skin and small intestine, with modest expression in muscle and prostate.

It is found in the cytoplasm. Its subcellular location is the cytosol. It localises to the microsome. The protein localises to the nucleus. It carries out the reaction an alcohol + 3'-phosphoadenylyl sulfate = an alkyl sulfate + adenosine 3',5'-bisphosphate + H(+). It catalyses the reaction pregnenolone + 3'-phosphoadenylyl sulfate = pregnenolone sulfate + adenosine 3',5'-bisphosphate + H(+). The enzyme catalyses 3beta-hydroxyandrost-5-en-17-one + 3'-phosphoadenylyl sulfate = dehydroepiandrosterone 3-sulfate + adenosine 3',5'-bisphosphate + H(+). The catalysed reaction is cholesterol + 3'-phosphoadenylyl sulfate = cholesterol sulfate + adenosine 3',5'-bisphosphate + H(+). Functionally, sulfotransferase that utilizes 3'-phospho-5'-adenylyl sulfate (PAPS) as sulfonate donor to catalyze the sulfate conjugation. Preferentially sulfonates cholesterol. Catalyzes sulfation of the 3beta-hydroxyl groups of steroids, such as, pregnenolone and dehydroepiandrosterone (DHEA). Cholesterol sulfation is approximately 10-fold higher than for pregnenolone and 20-fold higher than for DHEA. Plays a role in epidermal cholesterol metabolism and in the regulation of epidermal proliferation and differentiation. Its function is as follows. Strongly sulfonates pregnenolone, however is capable to sulfonate cholesterol with a high degree of efficiency. DHEA is a relatively poor substrate. The chain is Sulfotransferase 2B1 (Sult2b1) from Mus musculus (Mouse).